A 1026-amino-acid polypeptide reads, in one-letter code: Multidrug resistance protein MdtC (1026 aa).

The Cytoplasmic segment spans residues methionine 1–leucine 6. A helical membrane pass occupies residues phenylalanine 7 to phenylalanine 29. The Periplasmic portion of the chain corresponds to arginine 30–glutamate 335. A helical transmembrane segment spans residues glutamate 336–leucine 353. Residues arginine 354–threonine 359 are Cytoplasmic-facing. The chain crosses the membrane as a helical span at residues leucine 360–leucine 379. The Periplasmic portion of the chain corresponds to cysteine 380–serine 388. The chain crosses the membrane as a helical span at residues leucine 389–alanine 411. The Cytoplasmic segment spans residues arginine 412–glutamate 430. The chain crosses the membrane as a helical span at residues valine 431–glycine 453. Residues glycine 454–leucine 467 lie on the Periplasmic side of the membrane. A helical transmembrane segment spans residues serine 468–leucine 490. Residues lysine 491–glutamine 852 are Cytoplasmic-facing. Residues leucine 853–valine 875 traverse the membrane as a helical segment. The Periplasmic segment spans residues histidine 876–alanine 894. The helical transmembrane segment at leucine 895–valine 917 threads the bilayer. Residues lysine 918–cysteine 947 lie on the Cytoplasmic side of the membrane. The chain crosses the membrane as a helical span at residues leucine 948 to leucine 970. Residues serine 971 to isoleucine 984 are Periplasmic-facing. Residues threonine 985–phenylalanine 1007 traverse the membrane as a helical segment. Residues phenylalanine 1008–isoleucine 1026 lie on the Cytoplasmic side of the membrane.

It belongs to the resistance-nodulation-cell division (RND) (TC 2.A.6) family. MdtC subfamily. In terms of assembly, part of a tripartite efflux system composed of MdtA, MdtB and MdtC. MdtC forms a heteromultimer with MdtB.

The protein resides in the cell inner membrane. This is Multidrug resistance protein MdtC from Salmonella typhi.